A 511-amino-acid polypeptide reads, in one-letter code: 2-isopropylmalate synthase (511 aa).

The Pyruvate carboxyltransferase domain maps to 6–269; that stretch reads IIIFDTTLRD…YTDIKCENIF (264 aa). Residues aspartate 15, histidine 203, histidine 205, and asparagine 239 each coordinate Mn(2+). The regulatory domain stretch occupies residues 394-511; it reads VLEKLSVISG…SLKVEERKMA (118 aa).

It belongs to the alpha-IPM synthase/homocitrate synthase family. LeuA type 1 subfamily. Homodimer. Requires Mn(2+) as cofactor.

The protein resides in the cytoplasm. It carries out the reaction 3-methyl-2-oxobutanoate + acetyl-CoA + H2O = (2S)-2-isopropylmalate + CoA + H(+). Its pathway is amino-acid biosynthesis; L-leucine biosynthesis; L-leucine from 3-methyl-2-oxobutanoate: step 1/4. In terms of biological role, catalyzes the condensation of the acetyl group of acetyl-CoA with 3-methyl-2-oxobutanoate (2-ketoisovalerate) to form 3-carboxy-3-hydroxy-4-methylpentanoate (2-isopropylmalate). The chain is 2-isopropylmalate synthase from Campylobacter jejuni subsp. jejuni serotype O:2 (strain ATCC 700819 / NCTC 11168).